The chain runs to 500 residues: NAD(P)H-quinone oxidoreductase chain 4, chloroplastic (500 aa).

Helical transmembrane passes span 4 to 24, 35 to 55, 87 to 107, 113 to 130, 134 to 154, 167 to 187, 211 to 231, 242 to 262, 272 to 292, 305 to 325, 330 to 350, 386 to 406, 416 to 436, and 462 to 482; these read FPWL…MLFL, YTIC…CYNF, IGTI…AFPV, LFHF…GSFS, LLLF…LLSM, FILY…GISL, ILFY…IPLH, HYST…YGLV, AHSM…IYAA, IAYS…SITD, GAIL…FLAG, LALP…GIIT, ILII…LLSM, and LFLS…PDFV.

Belongs to the complex I subunit 4 family.

The protein resides in the plastid. It is found in the chloroplast thylakoid membrane. The catalysed reaction is a plastoquinone + NADH + (n+1) H(+)(in) = a plastoquinol + NAD(+) + n H(+)(out). It carries out the reaction a plastoquinone + NADPH + (n+1) H(+)(in) = a plastoquinol + NADP(+) + n H(+)(out). In Nasturtium officinale (Watercress), this protein is NAD(P)H-quinone oxidoreductase chain 4, chloroplastic.